The primary structure comprises 199 residues: FMN-dependent NADH:quinone oxidoreductase 2 (199 aa).

Residues Ser-10, 16 to 18 (SVS), and 96 to 99 (MYNF) each bind FMN.

This sequence belongs to the azoreductase type 1 family. As to quaternary structure, homodimer. It depends on FMN as a cofactor.

The catalysed reaction is 2 a quinone + NADH + H(+) = 2 a 1,4-benzosemiquinone + NAD(+). It carries out the reaction N,N-dimethyl-1,4-phenylenediamine + anthranilate + 2 NAD(+) = 2-(4-dimethylaminophenyl)diazenylbenzoate + 2 NADH + 2 H(+). In terms of biological role, quinone reductase that provides resistance to thiol-specific stress caused by electrophilic quinones. Also exhibits azoreductase activity. Catalyzes the reductive cleavage of the azo bond in aromatic azo compounds to the corresponding amines. This is FMN-dependent NADH:quinone oxidoreductase 2 from Pseudomonas putida (strain ATCC 47054 / DSM 6125 / CFBP 8728 / NCIMB 11950 / KT2440).